The following is a 406-amino-acid chain: Transposase for insertion sequence element IS1001 (406 aa).

Belongs to the transposase 12 family.

Involved in the transposition of the insertion sequence. The sequence is that of Transposase for insertion sequence element IS1001 (tnpA) from Bordetella parapertussis.